The sequence spans 432 residues: Serine hydroxymethyltransferase (432 aa).

(6S)-5,6,7,8-tetrahydrofolate is bound by residues L117 and 121–123 (GHL). K226 bears the N6-(pyridoxal phosphate)lysine mark. 366-368 (SPF) contributes to the (6S)-5,6,7,8-tetrahydrofolate binding site.

The protein belongs to the SHMT family. As to quaternary structure, homodimer. Pyridoxal 5'-phosphate is required as a cofactor.

Its subcellular location is the cytoplasm. It catalyses the reaction (6R)-5,10-methylene-5,6,7,8-tetrahydrofolate + glycine + H2O = (6S)-5,6,7,8-tetrahydrofolate + L-serine. Its pathway is one-carbon metabolism; tetrahydrofolate interconversion. The protein operates within amino-acid biosynthesis; glycine biosynthesis; glycine from L-serine: step 1/1. Functionally, catalyzes the reversible interconversion of serine and glycine with tetrahydrofolate (THF) serving as the one-carbon carrier. This reaction serves as the major source of one-carbon groups required for the biosynthesis of purines, thymidylate, methionine, and other important biomolecules. Also exhibits THF-independent aldolase activity toward beta-hydroxyamino acids, producing glycine and aldehydes, via a retro-aldol mechanism. The polypeptide is Serine hydroxymethyltransferase (Salinibacter ruber (strain DSM 13855 / M31)).